The primary structure comprises 74 residues: DNA gyrase inhibitor YacG (74 aa).

Positions 7, 10, 26, and 30 each coordinate Zn(2+).

This sequence belongs to the DNA gyrase inhibitor YacG family. In terms of assembly, interacts with GyrB. The cofactor is Zn(2+).

Its function is as follows. Inhibits all the catalytic activities of DNA gyrase by preventing its interaction with DNA. Acts by binding directly to the C-terminal domain of GyrB, which probably disrupts DNA binding by the gyrase. The protein is DNA gyrase inhibitor YacG of Shewanella denitrificans (strain OS217 / ATCC BAA-1090 / DSM 15013).